A 1902-amino-acid polypeptide reads, in one-letter code: Plexin-B3 (1902 aa).

An N-terminal signal peptide occupies residues 1-36 (MLTDFLQAPVMAPWSPFSLHLLLLFLPLLPLTRVHR). The region spanning 37-461 (FSVPNTSFNH…TAQQVDRILV (425 aa)) is the Sema domain. At 37–1245 (FSVPNTSFNH…MMSTFPVEAQ (1209 aa)) the chain is on the extracellular side. N41 is a glycosylation site (N-linked (GlcNAc...) asparagine). Intrachain disulfides connect C88–C97 and C122–C130. An N-linked (GlcNAc...) asparagine glycan is attached at N221. Intrachain disulfides connect C257–C360, C273–C305, and C323–C347. The segment at 353–372 (DSPESYPCGDEHTPSPIAGR) is disordered. 2 N-linked (GlcNAc...) asparagine glycosylation sites follow: N416 and N469. The PSI 1 domain maps to 463-515 (ACPQFPNCTTCLQARDPLCGWCILQGRCTRRGECGRAAQPNHWLWSYEDNHCP). Cystine bridges form between C464/C481, C470/C514, C473/C490, C484/C496, and C551/C569. PSI domains are found at residues 609–671 (DCSA…EACP) and 776–822 (DCAM…QLCP). N791, N889, N910, N946, N1090, and N1207 each carry an N-linked (GlcNAc...) asparagine glycan. 4 IPT/TIG domains span residues 823 to 914 (IPSI…FTYQ), 915 to 1001 (DPVL…FRYT), 1003 to 1134 (NPQL…FLYQ), and 1154 to 1221 (KPGH…QMGN). A helical membrane pass occupies residues 1246 to 1266 (LGLGMGAAVLIAAVLLLTLMY). Topologically, residues 1267–1902 (RHKSKKALRD…ALVEYKVTDL (636 aa)) are cytoplasmic.

It belongs to the plexin family. In terms of assembly, binds MET and MST1R. Interacts with RIT2/RIN. May form homodimers (via Sema domain). Interacts (via cytoplasmic domain) with FSCN1, ARHGDIA and RAC1. In terms of tissue distribution, expressed in brain (at protein level). In cerebellum, strongest expression detected in Purkinje and granular cells. Detected at very low levels in several fetal tissues, including dorsal root ganglia (DRG), heart, lung, optic bulb, brain and liver.

It localises to the cell membrane. Its function is as follows. Receptor for SEMA5A that plays a role in axon guidance, invasive growth and cell migration. Stimulates neurite outgrowth and mediates Ca(2+)/Mg(2+)-dependent cell aggregation. In glioma cells, SEMA5A stimulation of PLXNB3 results in the disassembly of F-actin stress fibers, disruption of focal adhesions and cellular collapse as well as inhibition of cell migration and invasion through ARHGDIA-mediated inactivation of RAC1. Seem to be non-essential for normal development and function of the central nervous system. This is Plexin-B3 (Plxnb3) from Mus musculus (Mouse).